The following is a 169-amino-acid chain: Thaumatin-like pathogenesis-related protein 4 (169 aa).

Positions 1-21 are cleaved as a signal peptide; the sequence is MATSSTVLFLLLAVFAASASA.

Belongs to the thaumatin family.

Its function is as follows. Associated with resistance against stem rust fungi. The polypeptide is Thaumatin-like pathogenesis-related protein 4 (RASTL-4) (Avena sativa (Oat)).